A 263-amino-acid polypeptide reads, in one-letter code: MRLSSNWSKLQDGVTKKAGKKRIDKKPHIIKKVGQDKKPKSKIMGMIYQMNKEIDQQKENKKVGKKFEFTETITEIDTVETTTETKKDANKIGKYIAMDCEFVGVGPEGKDSALARVSLVNFHGNVVLDIFVKPRETVTDWRTWVSGITPDHMKNAVSFKQAQQQLSDILKDKILVGHAVKHDLEALMLSHPKSKVIDTARHLPFRQKYAKGKSPSLKKLAKEILNMDIQSGQHSSVEDARATMLIYKSAKQDFDKEHRKKFH.

Residues 1-27 (MRLSSNWSKLQDGVTKKAGKKRIDKKP) are disordered. Positions 17 to 27 (KAGKKRIDKKP) are enriched in basic residues. In terms of domain architecture, Exonuclease spans 95 to 247 (YIAMDCEFVG…EDARATMLIY (153 aa)).

The protein belongs to the REXO4 family.

It is found in the nucleus. Functionally, exoribonuclease involved in ribosome biosynthesis. Involved in the processing of ITS1, the internal transcribed spacer localized between the 18S and 5.8S rRNAs. This chain is RNA exonuclease 4 (REX4), found in Candida glabrata (strain ATCC 2001 / BCRC 20586 / JCM 3761 / NBRC 0622 / NRRL Y-65 / CBS 138) (Yeast).